The sequence spans 353 residues: Photosystem II D2 protein (353 aa).

Thr2 is subject to N-acetylthreonine. Position 2 is a phosphothreonine (Thr2). Residues 41-61 (CAYFALGGWFTGTTFVTSWYT) form a helical membrane-spanning segment. Chlorophyll a is bound at residue His118. Residues 125 to 141 (GFMLRQFELARSVQLRP) form a helical membrane-spanning segment. Residues Gln130 and Asn143 each contribute to the pheophytin a site. A helical membrane pass occupies residues 153–166 (VFVSVFLIYPLGQS). Position 198 (His198) interacts with chlorophyll a. A helical transmembrane segment spans residues 208 to 228 (AALLCAIHGATVENTLFEDGD). A plastoquinone-binding residues include His215 and Phe262. His215 lines the Fe cation pocket. His269 contributes to the Fe cation binding site. Residues 279–295 (GLWMSAIGVVGLALNLR) form a helical membrane-spanning segment.

It belongs to the reaction center PufL/M/PsbA/D family. PSII is composed of 1 copy each of membrane proteins PsbA, PsbB, PsbC, PsbD, PsbE, PsbF, PsbH, PsbI, PsbJ, PsbK, PsbL, PsbM, PsbT, PsbX, PsbY, PsbZ, Psb30/Ycf12, at least 3 peripheral proteins of the oxygen-evolving complex and a large number of cofactors. It forms dimeric complexes. The D1/D2 heterodimer binds P680, chlorophylls that are the primary electron donor of PSII, and subsequent electron acceptors. It shares a non-heme iron and each subunit binds pheophytin, quinone, additional chlorophylls, carotenoids and lipids. There is also a Cl(-1) ion associated with D1 and D2, which is required for oxygen evolution. The PSII complex binds additional chlorophylls, carotenoids and specific lipids. is required as a cofactor.

Its subcellular location is the plastid. It localises to the chloroplast thylakoid membrane. It carries out the reaction 2 a plastoquinone + 4 hnu + 2 H2O = 2 a plastoquinol + O2. In terms of biological role, photosystem II (PSII) is a light-driven water:plastoquinone oxidoreductase that uses light energy to abstract electrons from H(2)O, generating O(2) and a proton gradient subsequently used for ATP formation. It consists of a core antenna complex that captures photons, and an electron transfer chain that converts photonic excitation into a charge separation. The D1/D2 (PsbA/PsbD) reaction center heterodimer binds P680, the primary electron donor of PSII as well as several subsequent electron acceptors. D2 is needed for assembly of a stable PSII complex. This Cycas taitungensis (Prince sago) protein is Photosystem II D2 protein.